Consider the following 333-residue polypeptide: Transcription factor MYB94 (333 aa).

2 consecutive HTH myb-type domains span residues 9 to 65 (KIGV…RPGI) and 66 to 116 (KRGN…KKKL). 2 DNA-binding regions (H-T-H motif) span residues 37-61 (WRSV…TNYL) and 89-112 (WAAI…NTHL). Polar residues predominate over residues 134-154 (KDFSISNKNTTSHQSSNSSKG). Disordered stretches follow at residues 134–157 (KDFS…GQWE) and 183–218 (PTNF…YPSG). A compositionally biased stretch (low complexity) spans 196 to 209 (SSSSSSTTTTTTTT).

As to expression, expressed in germinating seeds, rosette and cauline leaves, flower buds, open flowers, stems and developing siliques.

The protein resides in the nucleus. Its function is as follows. Transcription activator involved in the activation of cuticular wax biosynthesis under drought stress. Binds directly to the promoters of genes involved in cuticular wax biosynthesis. Transactivates WSD1, KCS2/DAISY, CER1, CER2, FAR3 and ECR genes. Functions together with MYB96 in the activation of cuticular wax biosynthesis. The protein is Transcription factor MYB94 of Arabidopsis thaliana (Mouse-ear cress).